The primary structure comprises 89 residues: Bacterial microcompartment shell vertex protein GrpN (89 aa).

Residues 1–83 (MYLGKVIGTV…IDAAVVGIVD (83 aa)) form the BMV domain.

This sequence belongs to the CcmL/EutN family. In terms of assembly, homopentamer with a small central pore.

It is found in the bacterial microcompartment. Functionally, probably forms vertices in the bacterial microcompartment (BMC) predicted to be involved in glycyl radical-based 1,2-propanediol metabolism in this organism. The polypeptide is Bacterial microcompartment shell vertex protein GrpN (Rhodospirillum rubrum (strain F11)).